We begin with the raw amino-acid sequence, 481 residues long: NADH-quinone oxidoreductase subunit N (481 aa).

Transmembrane regions (helical) follow at residues alanine 11–tryptophan 31, leucine 38–methionine 58, phenylalanine 69–valine 89, valine 107–leucine 127, leucine 128–tyrosine 148, phenylalanine 162–leucine 182, leucine 203–alanine 223, proline 237–isoleucine 257, tryptophan 271–isoleucine 291, methionine 299–threonine 319, phenylalanine 327–valine 347, tyrosine 370–phenylalanine 390, valine 401–phenylalanine 421, and leucine 457–methionine 477.

The protein belongs to the complex I subunit 2 family. As to quaternary structure, NDH-1 is composed of 14 different subunits. Subunits NuoA, H, J, K, L, M, N constitute the membrane sector of the complex.

The protein localises to the cell inner membrane. The enzyme catalyses a quinone + NADH + 5 H(+)(in) = a quinol + NAD(+) + 4 H(+)(out). Functionally, NDH-1 shuttles electrons from NADH, via FMN and iron-sulfur (Fe-S) centers, to quinones in the respiratory chain. The immediate electron acceptor for the enzyme in this species is believed to be ubiquinone. Couples the redox reaction to proton translocation (for every two electrons transferred, four hydrogen ions are translocated across the cytoplasmic membrane), and thus conserves the redox energy in a proton gradient. The chain is NADH-quinone oxidoreductase subunit N from Acidithiobacillus ferrooxidans (strain ATCC 23270 / DSM 14882 / CIP 104768 / NCIMB 8455) (Ferrobacillus ferrooxidans (strain ATCC 23270)).